Reading from the N-terminus, the 481-residue chain is Argininosuccinate synthase (481 aa).

ATP contacts are provided by residues 17-25 (AFSGGLDTS) and alanine 43. Tyrosine 99 provides a ligand contact to L-citrulline. The ATP site is built by glycine 129 and threonine 131. Residues threonine 131, asparagine 135, and aspartate 136 each coordinate L-aspartate. Residue asparagine 135 participates in L-citrulline binding. Residue aspartate 136 participates in ATP binding. Residues arginine 139 and serine 192 each coordinate L-citrulline. An ATP-binding site is contributed by aspartate 194. L-citrulline contacts are provided by threonine 201, glutamate 203, and glutamate 280.

Belongs to the argininosuccinate synthase family. Type 2 subfamily. As to quaternary structure, homotetramer.

Its subcellular location is the cytoplasm. The catalysed reaction is L-citrulline + L-aspartate + ATP = 2-(N(omega)-L-arginino)succinate + AMP + diphosphate + H(+). It functions in the pathway amino-acid biosynthesis; L-arginine biosynthesis; L-arginine from L-ornithine and carbamoyl phosphate: step 2/3. The sequence is that of Argininosuccinate synthase (argG) from Streptomyces coelicolor (strain ATCC BAA-471 / A3(2) / M145).